Consider the following 114-residue polypeptide: Flagellar hook-basal body complex protein FliE (114 aa).

The protein belongs to the FliE family.

It is found in the bacterial flagellum basal body. The protein is Flagellar hook-basal body complex protein FliE of Burkholderia vietnamiensis (strain G4 / LMG 22486) (Burkholderia cepacia (strain R1808)).